The sequence spans 45 residues: Lysis protein for colicin E1* (45 aa).

Residues 1-17 (MRKRFFVGIFAINLLVG) form the signal peptide. A lipid anchor (N-palmitoyl cysteine) is attached at cysteine 18. A lipid anchor (S-diacylglycerol cysteine) is attached at cysteine 18.

The protein localises to the cell outer membrane. In terms of biological role, lysis proteins are required for both colicin release and partial cell lysis. The sequence is that of Lysis protein for colicin E1* (kil) from Shigella sonnei.